Here is a 200-residue protein sequence, read N- to C-terminus: GTP cyclohydrolase 1 (200 aa).

Residues Cys87, His90, and Cys158 each coordinate Zn(2+).

The protein belongs to the GTP cyclohydrolase I family. As to quaternary structure, toroid-shaped homodecamer, composed of two pentamers of five dimers.

It catalyses the reaction GTP + H2O = 7,8-dihydroneopterin 3'-triphosphate + formate + H(+). Its pathway is cofactor biosynthesis; 7,8-dihydroneopterin triphosphate biosynthesis; 7,8-dihydroneopterin triphosphate from GTP: step 1/1. In Xanthomonas axonopodis pv. citri (strain 306), this protein is GTP cyclohydrolase 1.